The primary structure comprises 121 residues: Ribosome-binding factor A (121 aa).

Belongs to the RbfA family. In terms of assembly, monomer. Binds 30S ribosomal subunits, but not 50S ribosomal subunits or 70S ribosomes.

Its subcellular location is the cytoplasm. Functionally, one of several proteins that assist in the late maturation steps of the functional core of the 30S ribosomal subunit. Associates with free 30S ribosomal subunits (but not with 30S subunits that are part of 70S ribosomes or polysomes). Required for efficient processing of 16S rRNA. May interact with the 5'-terminal helix region of 16S rRNA. In Finegoldia magna (strain ATCC 29328 / DSM 20472 / WAL 2508) (Peptostreptococcus magnus), this protein is Ribosome-binding factor A.